A 368-amino-acid chain; its full sequence is Glutamate 5-kinase (368 aa).

Lysine 9 is an ATP binding site. Positions 49, 136, and 148 each coordinate substrate. Residues 168 to 169 and 210 to 216 each bind ATP; these read TD and TGGMMTK. Residues 275-353 form the PUA domain; sequence AGIITIDNGA…ADIENVLGYE (79 aa).

The protein belongs to the glutamate 5-kinase family.

It localises to the cytoplasm. The catalysed reaction is L-glutamate + ATP = L-glutamyl 5-phosphate + ADP. It functions in the pathway amino-acid biosynthesis; L-proline biosynthesis; L-glutamate 5-semialdehyde from L-glutamate: step 1/2. Functionally, catalyzes the transfer of a phosphate group to glutamate to form L-glutamate 5-phosphate. This chain is Glutamate 5-kinase, found in Haemophilus influenzae (strain PittGG).